Reading from the N-terminus, the 647-residue chain is Threonine--tRNA ligase (647 aa).

Positions 1–63 (MADISIKFPD…ASDGSIEIVT (63 aa)) constitute a TGS domain. The interval 242–540 (DHRVIGNQLD…LTEIYKGAFP (299 aa)) is catalytic. The Zn(2+) site is built by cysteine 336, histidine 387, and histidine 517.

It belongs to the class-II aminoacyl-tRNA synthetase family. Homodimer. Requires Zn(2+) as cofactor.

The protein localises to the cytoplasm. The catalysed reaction is tRNA(Thr) + L-threonine + ATP = L-threonyl-tRNA(Thr) + AMP + diphosphate + H(+). Catalyzes the attachment of threonine to tRNA(Thr) in a two-step reaction: L-threonine is first activated by ATP to form Thr-AMP and then transferred to the acceptor end of tRNA(Thr). Also edits incorrectly charged L-seryl-tRNA(Thr). The protein is Threonine--tRNA ligase of Levilactobacillus brevis (strain ATCC 367 / BCRC 12310 / CIP 105137 / JCM 1170 / LMG 11437 / NCIMB 947 / NCTC 947) (Lactobacillus brevis).